Consider the following 457-residue polypeptide: Argininosuccinate lyase (457 aa).

Belongs to the lyase 1 family. Argininosuccinate lyase subfamily.

It localises to the cytoplasm. It carries out the reaction 2-(N(omega)-L-arginino)succinate = fumarate + L-arginine. It participates in amino-acid biosynthesis; L-arginine biosynthesis; L-arginine from L-ornithine and carbamoyl phosphate: step 3/3. This is Argininosuccinate lyase from Yersinia pseudotuberculosis serotype O:3 (strain YPIII).